The following is a 140-amino-acid chain: Sex-regulated protein janus-B (140 aa).

Residue arginine 42 participates in substrate binding. Histidine 69 (proton acceptor) is an active-site residue. 110–112 serves as a coordination point for substrate; the sequence is SRT.

This sequence belongs to the janus family.

JanA and janB regulate somatic sex differentiation. The polypeptide is Sex-regulated protein janus-B (janB) (Drosophila simulans (Fruit fly)).